A 119-amino-acid polypeptide reads, in one-letter code: MKRVAFIFSSAPHGSAAGREGLDALLATSALTDEIGVFFVGDGVFQLLPDQRPGAVLARDYIATFKLLSLYDIDQCWLCADSARERGLDPATPWVVDVECLAPDALRARLHEFDVILRF.

Belongs to the DsrF/TusC family. As to quaternary structure, heterohexamer, formed by a dimer of trimers. The hexameric TusBCD complex contains 2 copies each of TusB, TusC and TusD. The TusBCD complex interacts with TusE.

It localises to the cytoplasm. Part of a sulfur-relay system required for 2-thiolation of 5-methylaminomethyl-2-thiouridine (mnm(5)s(2)U) at tRNA wobble positions. This chain is Protein TusC, found in Klebsiella pneumoniae (strain 342).